The sequence spans 938 residues: E3 ubiquitin-protein ligase CBL-B (938 aa).

The segment at 35–167 is 4H; that stretch reads PPKQAAADRR…KAIFPNGQFQ (133 aa). Residues 35–343 form the Cbl-PTB domain; it reads PPKQAAADRR…GRSYNPDLTG (309 aa). The EF-hand-like stretch occupies residues 168 to 240; sequence GDNFRITKAD…FEFDIFTRLF (73 aa). Residues Asp221, Thr223, Asn225, Tyr227, and Glu232 each contribute to the Ca(2+) site. Residues 241 to 343 are SH2-like; the sequence is QPWGSILRNW…GRSYNPDLTG (103 aa). The residue at position 282 (Ser282) is a Phosphoserine; by PKC/PRKCQ. Arg286 is a binding site for 4-O-phospho-L-tyrosine. A linker region spans residues 344–372; sequence LCEPTPHDHIKVTQEQYELYCEMGSTFQL. Tyr363 carries the phosphotyrosine modification. The RING-type zinc-finger motif lies at 373 to 412; that stretch reads CKICAENDKDVKIEPCGHLMCTSCLTAWQESDGQGCPFCR. The interval 465 to 588 is disordered; the sequence is ASVRKCTDRQ…SVPSRDQPMP (124 aa). Polar residues predominate over residues 473–486; the sequence is RQNSPVTSPGSSPL. Phosphoserine is present on residues Ser476, Ser480, Ser484, Ser521, Ser525, and Ser529. The interaction with VAV1 stretch occupies residues 543–567; sequence PLPAPPPPLRDPPPPPERPPPIPPD. A compositionally biased stretch (pro residues) spans 544–566; that stretch reads LPAPPPPLRDPPPPPERPPPIPP. The residue at position 633 (Ser633) is a Phosphoserine. Tyr664 and Tyr708 each carry phosphotyrosine. Disordered stretches follow at residues 702 to 725 and 771 to 885; these read EEDDDEYKIPSSHPVSLNSQPSHC and DALP…EAAL. Residues 714-724 show a composition bias toward polar residues; that stretch reads HPVSLNSQPSH. Residues 775-784 show a composition bias toward pro residues; it reads PSLPPPPPPA. Over residues 794–804 the composition is skewed to low complexity; that stretch reads PPGSSSRPSSG. Positions 839–855 are enriched in polar residues; that stretch reads NRASQDYDQLPSSSDGS. Position 845 is a phosphotyrosine (Tyr845). Residues 847 to 883 form an interaction with SH3KBP1 region; the sequence is QLPSSSDGSQAPARPPKPRPRRTAPEIHHRKPHGPEA. Over residues 862-878 the composition is skewed to basic residues; sequence PKPRPRRTAPEIHHRKP. The 40-residue stretch at 887–926 folds into the UBA domain; it reads NVDAKIAKLMGEGYAFEEVKRALEIAQNNLEVARSILREF.

As to quaternary structure, interacts with SH3 domain-containing proteins LCK, CRK and SORBS1. Interacts with LCP2 and ZAP70. Interacts with CBL. Interacts with SH3 domain-containing proteins VAV1, FYN, FGR, PLCG1, GRB2, CRKL, PIK3R1 and SH3KBP1/CIN85. Identified in heterotrimeric complexes with SH3KBP1/CIN85, CD2AP and ARHGEF7, where one CBLB peptide binds two copies of the other protein. Interacts with poly-ubiquitinated proteins. Dimerization is required for the binding of poly-ubiquitin, but not for the binding of mono-ubiquitin. Interacts with EGFR (phosphorylated). Interacts with IFT20. Phosphorylated on tyrosine and serine residues upon TCR or BCR activation, and upon various types of cell stimulation. Post-translationally, auto-ubiquitinated upon EGF-mediated cell activation or upon T-cell costimulation by CD28; which promotes proteasomal degradation.

It localises to the cytoplasm. The catalysed reaction is S-ubiquitinyl-[E2 ubiquitin-conjugating enzyme]-L-cysteine + [acceptor protein]-L-lysine = [E2 ubiquitin-conjugating enzyme]-L-cysteine + N(6)-ubiquitinyl-[acceptor protein]-L-lysine.. It functions in the pathway protein modification; protein ubiquitination. Functionally, E3 ubiquitin-protein ligase which accepts ubiquitin from specific E2 ubiquitin-conjugating enzymes, and transfers it to substrates, generally promoting their degradation by the proteasome. Negatively regulates TCR (T-cell receptor), BCR (B-cell receptor) and FCER1 (high affinity immunoglobulin epsilon receptor) signal transduction pathways. In naive T-cells, inhibits VAV1 activation upon TCR engagement and imposes a requirement for CD28 costimulation for proliferation and IL-2 production. Also acts by promoting PIK3R1/p85 ubiquitination, which impairs its recruitment to the TCR and subsequent activation. In activated T-cells, inhibits PLCG1 activation and calcium mobilization upon restimulation and promotes anergy. In B-cells, acts by ubiquitinating SYK and promoting its proteasomal degradation. Slightly promotes SRC ubiquitination. May be involved in EGFR ubiquitination and internalization. May be functionally coupled with the E2 ubiquitin-protein ligase UB2D3. In association with CBL, required for proper feedback inhibition of ciliary platelet-derived growth factor receptor-alpha (PDGFRA) signaling pathway via ubiquitination and internalization of PDGFRA. This Rattus norvegicus (Rat) protein is E3 ubiquitin-protein ligase CBL-B (Cblb).